Consider the following 560-residue polypeptide: Membrane protein insertase YidC (560 aa).

A helical transmembrane segment spans residues 7-27 (ILIVALAIVSYVMVLKWNQDY). The segment at 43–72 (APAIPDTPLGNNASASADVPSANGETSAPL) is disordered. The next 4 membrane-spanning stretches (helical) occupy residues 367–387 (IVGN…GIFF), 437–457 (LGGC…YWVL), 468–488 (FMLW…PIIM), and 515–535 (PIIF…YWVV).

The protein belongs to the OXA1/ALB3/YidC family. Type 1 subfamily. Interacts with the Sec translocase complex via SecD. Specifically interacts with transmembrane segments of nascent integral membrane proteins during membrane integration.

The protein localises to the cell inner membrane. In terms of biological role, required for the insertion and/or proper folding and/or complex formation of integral membrane proteins into the membrane. Involved in integration of membrane proteins that insert both dependently and independently of the Sec translocase complex, as well as at least some lipoproteins. Aids folding of multispanning membrane proteins. This chain is Membrane protein insertase YidC, found in Pseudomonas fluorescens (strain SBW25).